The primary structure comprises 151 residues: Deoxyuridine 5'-triphosphate nucleotidohydrolase (151 aa).

Substrate-binding positions include 69–71, asparagine 82, and 86–88; these read RSG and TID.

It belongs to the dUTPase family. Requires Mg(2+) as cofactor.

It catalyses the reaction dUTP + H2O = dUMP + diphosphate + H(+). Its pathway is pyrimidine metabolism; dUMP biosynthesis; dUMP from dCTP (dUTP route): step 2/2. Its function is as follows. This enzyme is involved in nucleotide metabolism: it produces dUMP, the immediate precursor of thymidine nucleotides and it decreases the intracellular concentration of dUTP so that uracil cannot be incorporated into DNA. This Rhodospirillum centenum (strain ATCC 51521 / SW) protein is Deoxyuridine 5'-triphosphate nucleotidohydrolase.